The sequence spans 207 residues: Ribosomal RNA small subunit methyltransferase G (207 aa).

S-adenosyl-L-methionine is bound by residues G73, L78, 124 to 125 (VE), and R139.

It belongs to the methyltransferase superfamily. RNA methyltransferase RsmG family.

It is found in the cytoplasm. The enzyme catalyses guanosine(527) in 16S rRNA + S-adenosyl-L-methionine = N(7)-methylguanosine(527) in 16S rRNA + S-adenosyl-L-homocysteine. In terms of biological role, specifically methylates the N7 position of guanine in position 527 of 16S rRNA. The protein is Ribosomal RNA small subunit methyltransferase G of Escherichia coli O1:K1 / APEC.